We begin with the raw amino-acid sequence, 320 residues long: Quinolinate synthase (320 aa).

Residues His34 and Ser51 each contribute to the iminosuccinate site. Residue Cys96 participates in [4Fe-4S] cluster binding. Iminosuccinate contacts are provided by residues 122-124 (YIN) and Ser139. Cys182 provides a ligand contact to [4Fe-4S] cluster. Iminosuccinate is bound by residues 208–210 (HPE) and Thr225. Cys276 serves as a coordination point for [4Fe-4S] cluster.

This sequence belongs to the quinolinate synthase family. Type 2 subfamily. [4Fe-4S] cluster serves as cofactor.

The protein resides in the cytoplasm. The enzyme catalyses iminosuccinate + dihydroxyacetone phosphate = quinolinate + phosphate + 2 H2O + H(+). The protein operates within cofactor biosynthesis; NAD(+) biosynthesis; quinolinate from iminoaspartate: step 1/1. Its function is as follows. Catalyzes the condensation of iminoaspartate with dihydroxyacetone phosphate to form quinolinate. This is Quinolinate synthase from Synechococcus sp. (strain ATCC 27144 / PCC 6301 / SAUG 1402/1) (Anacystis nidulans).